A 402-amino-acid polypeptide reads, in one-letter code: 8-amino-7-oxononanoate synthase (402 aa).

Arg26 is a binding site for substrate. Residue 114–115 (GY) coordinates pyridoxal 5'-phosphate. His139 lines the substrate pocket. The pyridoxal 5'-phosphate site is built by Ser182, His210, and Thr239. Lys242 carries the post-translational modification N6-(pyridoxal phosphate)lysine. Thr359 serves as a coordination point for substrate.

The protein belongs to the class-II pyridoxal-phosphate-dependent aminotransferase family. BioF subfamily. Homodimer. Pyridoxal 5'-phosphate serves as cofactor.

It carries out the reaction 6-carboxyhexanoyl-[ACP] + L-alanine + H(+) = (8S)-8-amino-7-oxononanoate + holo-[ACP] + CO2. It participates in cofactor biosynthesis; biotin biosynthesis. In terms of biological role, catalyzes the decarboxylative condensation of pimeloyl-[acyl-carrier protein] and L-alanine to produce 8-amino-7-oxononanoate (AON), [acyl-carrier protein], and carbon dioxide. This Halorhodospira halophila (strain DSM 244 / SL1) (Ectothiorhodospira halophila (strain DSM 244 / SL1)) protein is 8-amino-7-oxononanoate synthase.